Reading from the N-terminus, the 149-residue chain is Macrodomain Ter protein (149 aa).

Belongs to the MatP family. Homodimer.

It localises to the cytoplasm. Required for spatial organization of the terminus region of the chromosome (Ter macrodomain) during the cell cycle. Prevents early segregation of duplicated Ter macrodomains during cell division. Binds specifically to matS, which is a 13 bp signature motif repeated within the Ter macrodomain. The chain is Macrodomain Ter protein from Vibrio campbellii (strain ATCC BAA-1116).